We begin with the raw amino-acid sequence, 280 residues long: 2-dehydro-3-deoxyphosphooctonate aldolase (280 aa).

The protein belongs to the KdsA family.

It is found in the cytoplasm. The catalysed reaction is D-arabinose 5-phosphate + phosphoenolpyruvate + H2O = 3-deoxy-alpha-D-manno-2-octulosonate-8-phosphate + phosphate. Its pathway is carbohydrate biosynthesis; 3-deoxy-D-manno-octulosonate biosynthesis; 3-deoxy-D-manno-octulosonate from D-ribulose 5-phosphate: step 2/3. The protein operates within bacterial outer membrane biogenesis; lipopolysaccharide biosynthesis. This is 2-dehydro-3-deoxyphosphooctonate aldolase from Desulfotalea psychrophila (strain LSv54 / DSM 12343).